The chain runs to 79 residues: MVDAITVLTAIGITVLMLLMVISGAAMIVKELNPNDIFTMQSLKFNRAVTIFKYIGLFIYIPGTIILYATYVKSLLMKS.

The Intravirion segment spans residues 1 to 8 (MVDAITVL). Residues 9-29 (TAIGITVLMLLMVISGAAMIV) form a helical membrane-spanning segment. The Virion surface segment spans residues 30-47 (KELNPNDIFTMQSLKFNR). A helical transmembrane segment spans residues 48–68 (AVTIFKYIGLFIYIPGTIILY). Topologically, residues 69 to 79 (ATYVKSLLMKS) are intravirion.

This sequence belongs to the orthopoxvirus OPG081 family.

It localises to the virion membrane. In terms of biological role, envelope protein. The sequence is that of Protein OPG081 (OPG081) from Vaccinia virus (strain Copenhagen) (VACV).